We begin with the raw amino-acid sequence, 334 residues long: G-protein coupled receptor 12 (334 aa).

Residues 1-48 are Extracellular-facing; that stretch reads MNEDPKVNLSGLPRDCIEAGTPENISAAVPSQGSVVESEPELVVNPWD. 2 N-linked (GlcNAc...) asparagine glycosylation sites follow: N8 and N24. The helical transmembrane segment at 49 to 69 threads the bilayer; it reads IVLCSSGTLICCENAVVVLII. Residues 70–78 are Cytoplasmic-facing; sequence FHSPSLRAP. The chain crosses the membrane as a helical span at residues 79–99; it reads MFLLIGSLALADLLAGLGLII. The Extracellular portion of the chain corresponds to 100-113; sequence NFVFAYLLQSEATK. Residues 114–134 form a helical membrane-spanning segment; that stretch reads LVTIGLIVASFSASVCSLLAI. The Cytoplasmic portion of the chain corresponds to 135–158; sequence TVDRYLSLYYALTYHSERTVTFTY. The chain crosses the membrane as a helical span at residues 159 to 179; the sequence is VMLVMLWGTSTCLGLLPVMGW. Residues 180-199 lie on the Extracellular side of the membrane; the sequence is NCLRDESTCSVVRPLTKNNA. A helical membrane pass occupies residues 200-220; sequence AILSISFLFMFALMLQLYIQI. At 221-252 the chain is on the cytoplasmic side; it reads CKIVMRHAHQIALQHHFLATSHYVTTRKGIST. A helical membrane pass occupies residues 253-273; it reads LALILGTFAACWMPFTLYSLI. The Extracellular segment spans residues 274–282; sequence ADYTYPSIY. A helical transmembrane segment spans residues 283–303; sequence TYATLLPATYNSIINPVIYAF. The Cytoplasmic segment spans residues 304-334; sequence RNQEIQKALCLICCGCIPNTLSQRARSPSDV. C317 carries the S-palmitoyl cysteine lipid modification. Phosphoserine is present on residues S330 and S332.

The protein belongs to the G-protein coupled receptor 1 family. Expressed in the brain, pituitary gland and testis.

It is found in the cell membrane. Functionally, receptor with constitutive G(s) signaling activity that activates cyclic AMP. Promotes neurite outgrowth and blocks myelin inhibition in neurons. The chain is G-protein coupled receptor 12 (Gpr12) from Rattus norvegicus (Rat).